Here is a 525-residue protein sequence, read N- to C-terminus: Vesicular inhibitory amino acid transporter (525 aa).

The Cytoplasmic segment spans residues 1–132 (MATLLRSKLT…WNVTNAIQGM (132 aa)). A helical membrane pass occupies residues 133 to 153 (FVLGLPYAILHGGYLGLFLII). Residues 154-204 (FAAVVCCYTGKILIACLYEENEDGEVVRVRDSYVAIANACCAPRFPTLGGR) lie on the Lumenal, vesicle side of the membrane. 3'-nitrotyrosine is present on Tyr-186. Residues 205–225 (VVNVAQIIELVMTCILYVVVS) form a helical membrane-spanning segment. At 226 to 265 (GNLMYNSFPGLPVSQKSWSIIATAVLLPCAFLKNLKAVSK) the chain is on the cytoplasmic side. A helical membrane pass occupies residues 266-286 (FSLLCTLAHFVINILVIAYCL). The Lumenal, vesicle segment spans residues 287 to 305 (SRARDWAWEKVKFYIDVKK). A helical transmembrane segment spans residues 306–326 (FPISIGIIVFSYTSQIFLPSL). At 327–341 (EGNMQQPSEFHCMMN) the chain is on the cytoplasmic side. Residues 342 to 362 (WTHIAACVLKGLFALVAYLTW) traverse the membrane as a helical segment. The Lumenal, vesicle portion of the chain corresponds to 363–383 (ADETKEVITDNLPGSIRAVVN). The chain crosses the membrane as a helical span at residues 384–404 (IFLVAKALLSYPLPFFAAVEV). Residues 405 to 438 (LEKSLFQEGSRAFFPACYGGDGRLKSWGLTLRCA) are Cytoplasmic-facing. Residues 439 to 459 (LVVFTLLMAIYVPHFALLMGL) form a helical membrane-spanning segment. Residues 460–461 (TG) lie on the Lumenal, vesicle side of the membrane. Residues 462-482 (SLTGAGLCFLLPSLFHLRLLW) traverse the membrane as a helical segment. At 483-489 (RKLLWHQ) the chain is on the cytoplasmic side. Residues 490 to 510 (VFFDVAIFVIGGICSVSGFVH) traverse the membrane as a helical segment. Topologically, residues 511–525 (SLEGLIEAYRTNAED) are lumenal, vesicle.

It belongs to the amino acid/polyamine transporter 2 family. In terms of tissue distribution, brain. Expressed at high levels within the neocortex, hippocampus, cerebellum, striatum, septal nuclei and the reticular nucleus of the thalamus. Also expressed in islets where it is more abundant in the peripheral/mantle region. Highly expressed in the nerve endings of GABA neurons in the brain and spinal cord but also in glycinergic nerve endings. Expressed in glycine-, GABA- or GABA- and glycine-containing boutons.

It localises to the cytoplasmic vesicle. It is found in the secretory vesicle. The protein localises to the synaptic vesicle membrane. Its subcellular location is the presynapse. It carries out the reaction beta-alanine(out) + n H(+)(in) = beta-alanine(in) + n H(+)(out). The enzyme catalyses 4-aminobutanoate(out) + n H(+)(in) = 4-aminobutanoate(in) + n H(+)(out). The catalysed reaction is glycine(out) + n H(+)(in) = glycine(in) + n H(+)(out). Its function is as follows. Antiporter that exchanges vesicular protons for cytosolic 4-aminobutanoate or to a lesser extend glycine, thus allowing their secretion from nerve terminals. The transport is equally dependent on the chemical and electrical components of the proton gradient. May also transport beta-alanine. Acidification of GABAergic synaptic vesicles is a prerequisite for 4-aminobutanoate uptake. This chain is Vesicular inhibitory amino acid transporter, found in Rattus norvegicus (Rat).